The primary structure comprises 240 residues: Probable transcriptional regulatory protein HPP12_0160 (240 aa).

It belongs to the TACO1 family.

The protein resides in the cytoplasm. The protein is Probable transcriptional regulatory protein HPP12_0160 of Helicobacter pylori (strain P12).